The chain runs to 430 residues: Adenylosuccinate synthetase (430 aa).

Residues 17–23 and 45–47 contribute to the GTP site; these read GDEGKGK and GHT. Asp18 functions as the Proton acceptor in the catalytic mechanism. 2 residues coordinate Mg(2+): Asp18 and Gly45. Residues 18–21, 43–46, Thr139, Arg153, Asn229, Thr244, and Arg308 each bind IMP; these read DEGK and NAGH. The active-site Proton donor is the His46. 304-310 serves as a coordination point for substrate; that stretch reads TVTGRRR. GTP is bound by residues Arg310, 336 to 338, and 418 to 420; these read KLD and GVG.

Belongs to the adenylosuccinate synthetase family. Homodimer. The cofactor is Mg(2+).

The protein resides in the cytoplasm. It carries out the reaction IMP + L-aspartate + GTP = N(6)-(1,2-dicarboxyethyl)-AMP + GDP + phosphate + 2 H(+). It participates in purine metabolism; AMP biosynthesis via de novo pathway; AMP from IMP: step 1/2. Functionally, plays an important role in the de novo pathway and in the salvage pathway of purine nucleotide biosynthesis. Catalyzes the first committed step in the biosynthesis of AMP from IMP. The protein is Adenylosuccinate synthetase of Cryptococcus neoformans var. neoformans serotype D (strain JEC21 / ATCC MYA-565) (Filobasidiella neoformans).